Consider the following 106-residue polypeptide: ATP-dependent Clp protease adapter protein ClpS (106 aa).

Belongs to the ClpS family. In terms of assembly, binds to the N-terminal domain of the chaperone ClpA.

Functionally, involved in the modulation of the specificity of the ClpAP-mediated ATP-dependent protein degradation. In Vibrio vulnificus (strain CMCP6), this protein is ATP-dependent Clp protease adapter protein ClpS.